The sequence spans 427 residues: MTAIVDIIGREILDSRGNPTVEVDVVLEDGSVGRAAVPSGASTGAHEAVELRDGDKARYLGKGVLKAVEAVNGELFDALGGMDAEQQVQIDQTMIELDGTPNKGRLGANAILGVSLAVAKAAASSYDLPLYRYVGGTSARTLPVPMMNIINGGAHADNPIDFQEFMIMPVGAASFSEALRCGSEIFHTLKGELKKAGHNTNVGDEGGFAPNLPSADAALDFVMAAIGKAGYKAGEDVMIALDPASTEFFKNGKYVYEAEGRSLGPQEQAKYLADLVARYPIVSIEDGMAEDDIEGWKAITDLIGDKCQLVGDDLFVTNVTRLADGIKNGYANSILIKVNQIGTLTETLAAVEMAHKAGYTAVMSHRSGETEDSTIADLAVATNCGQIKTGSLARADRTAKYNQLLRIEQELGAQAHYAGKAALKAFR.

Residue Gln163 participates in (2R)-2-phosphoglycerate binding. The active-site Proton donor is Glu205. Residues Asp242, Glu285, and Asp312 each coordinate Mg(2+). (2R)-2-phosphoglycerate contacts are provided by Lys337, Arg366, Ser367, and Lys388. Lys337 acts as the Proton acceptor in catalysis.

This sequence belongs to the enolase family. Requires Mg(2+) as cofactor.

Its subcellular location is the cytoplasm. It is found in the secreted. The protein resides in the cell surface. It carries out the reaction (2R)-2-phosphoglycerate = phosphoenolpyruvate + H2O. It functions in the pathway carbohydrate degradation; glycolysis; pyruvate from D-glyceraldehyde 3-phosphate: step 4/5. In terms of biological role, catalyzes the reversible conversion of 2-phosphoglycerate (2-PG) into phosphoenolpyruvate (PEP). It is essential for the degradation of carbohydrates via glycolysis. This chain is Enolase, found in Rhodopseudomonas palustris (strain BisB5).